The primary structure comprises 303 residues: Oxygen-dependent coproporphyrinogen-III oxidase (303 aa).

Ser93 is a binding site for substrate. A divalent metal cation contacts are provided by His97 and His107. His107 (proton donor) is an active-site residue. 109–111 (NVR) serves as a coordination point for substrate. A divalent metal cation is bound by residues His146 and His176. An important for dimerization region spans residues 241–276 (YVEFNLVYDRGTLFGLQSGGRTESILMSLPPQVRWG). Position 259 to 261 (259 to 261 (GGR)) interacts with substrate.

Belongs to the aerobic coproporphyrinogen-III oxidase family. As to quaternary structure, homodimer. A divalent metal cation is required as a cofactor.

It is found in the cytoplasm. The enzyme catalyses coproporphyrinogen III + O2 + 2 H(+) = protoporphyrinogen IX + 2 CO2 + 2 H2O. Its pathway is porphyrin-containing compound metabolism; protoporphyrin-IX biosynthesis; protoporphyrinogen-IX from coproporphyrinogen-III (O2 route): step 1/1. In terms of biological role, involved in the heme biosynthesis. Catalyzes the aerobic oxidative decarboxylation of propionate groups of rings A and B of coproporphyrinogen-III to yield the vinyl groups in protoporphyrinogen-IX. The sequence is that of Oxygen-dependent coproporphyrinogen-III oxidase from Pseudomonas entomophila (strain L48).